The sequence spans 444 residues: Adenylosuccinate synthetase (444 aa).

GTP-binding positions include 19 to 25 (GDEGKGK) and 47 to 49 (GHT). Asp20 functions as the Proton acceptor in the catalytic mechanism. Positions 20 and 47 each coordinate Mg(2+). Residues 20-23 (DEGK), 45-48 (NAGH), Thr139, Arg153, Gln234, Thr249, and Arg317 contribute to the IMP site. Residue His48 is the Proton donor of the active site. 313-319 (TVTGRPR) provides a ligand contact to substrate. Residues Arg319, 345-347 (KLD), and 427-429 (STG) contribute to the GTP site.

Belongs to the adenylosuccinate synthetase family. As to quaternary structure, homodimer. Mg(2+) is required as a cofactor.

It is found in the cytoplasm. It carries out the reaction IMP + L-aspartate + GTP = N(6)-(1,2-dicarboxyethyl)-AMP + GDP + phosphate + 2 H(+). The protein operates within purine metabolism; AMP biosynthesis via de novo pathway; AMP from IMP: step 1/2. Its function is as follows. Plays an important role in the de novo pathway of purine nucleotide biosynthesis. Catalyzes the first committed step in the biosynthesis of AMP from IMP. The protein is Adenylosuccinate synthetase of Methylibium petroleiphilum (strain ATCC BAA-1232 / LMG 22953 / PM1).